Reading from the N-terminus, the 89-residue chain is Small ribosomal subunit protein uS15 (89 aa).

Belongs to the universal ribosomal protein uS15 family. As to quaternary structure, part of the 30S ribosomal subunit. Forms a bridge to the 50S subunit in the 70S ribosome, contacting the 23S rRNA.

Functionally, one of the primary rRNA binding proteins, it binds directly to 16S rRNA where it helps nucleate assembly of the platform of the 30S subunit by binding and bridging several RNA helices of the 16S rRNA. Its function is as follows. Forms an intersubunit bridge (bridge B4) with the 23S rRNA of the 50S subunit in the ribosome. The protein is Small ribosomal subunit protein uS15 of Klebsiella pneumoniae (strain 342).